A 429-amino-acid chain; its full sequence is Enolase (429 aa).

Q162 provides a ligand contact to (2R)-2-phosphoglycerate. E204 (proton donor) is an active-site residue. Mg(2+) contacts are provided by D241, E288, and D315. Positions 340, 369, 370, and 391 each coordinate (2R)-2-phosphoglycerate. K340 (proton acceptor) is an active-site residue.

This sequence belongs to the enolase family. The cofactor is Mg(2+).

It is found in the cytoplasm. The protein localises to the secreted. It localises to the cell surface. The enzyme catalyses (2R)-2-phosphoglycerate = phosphoenolpyruvate + H2O. Its pathway is carbohydrate degradation; glycolysis; pyruvate from D-glyceraldehyde 3-phosphate: step 4/5. Functionally, catalyzes the reversible conversion of 2-phosphoglycerate (2-PG) into phosphoenolpyruvate (PEP). It is essential for the degradation of carbohydrates via glycolysis. The chain is Enolase from Christiangramia forsetii (strain DSM 17595 / CGMCC 1.15422 / KT0803) (Gramella forsetii).